We begin with the raw amino-acid sequence, 303 residues long: Small ribosomal subunit protein bS1m (303 aa).

S2 carries the N-acetylserine modification. The transit peptide at 2–13 (SFAQILRGSRAM) directs the protein to the mitochondrion; not cleaved.

The protein belongs to the bacterial ribosomal protein bS1 family. Component of the mitochondrial small ribosomal subunit (mt-SSU). Mature yeast 74S mitochondrial ribosomes consist of a small (37S) and a large (54S) subunit. The 37S small subunit contains a 15S ribosomal RNA (15S mt-rRNA) and at least 32 different proteins. The 54S large subunit contains a 21S rRNA (21S mt-rRNA) and at least 45 different proteins. This subunit is mutually exclusive with mug178/small ribosomal subunit protein L51-b.

It localises to the mitochondrion. Functionally, component of the mitochondrial ribosome (mitoribosome), a dedicated translation machinery responsible for the synthesis of mitochondrial genome-encoded proteins, including at least some of the essential transmembrane subunits of the mitochondrial respiratory chain. The mitoribosomes are attached to the mitochondrial inner membrane and translation products are cotranslationally integrated into the membrane. bS1m functionally interacts with the 5'-UTR of mitochondrial mRNAs. Plays an essential role in mitochondrial translation. This is Small ribosomal subunit protein bS1m (mrp51) from Schizosaccharomyces pombe (strain 972 / ATCC 24843) (Fission yeast).